The sequence spans 28 residues: Short cationic peptide-1a (28 aa).

At glutamate 28 the chain carries Glutamic acid 1-amide.

In terms of tissue distribution, expressed by the venom gland.

The protein localises to the secreted. This Cupiennius salei (American wandering spider) protein is Short cationic peptide-1a.